We begin with the raw amino-acid sequence, 286 residues long: NAD kinase (286 aa).

Residue Asp-74 is the Proton acceptor of the active site. NAD(+) is bound by residues 74 to 75, 148 to 149, Asp-178, Ala-186, 189 to 194, and Gln-244; these read DG, ND, and TAYNLS.

This sequence belongs to the NAD kinase family. It depends on a divalent metal cation as a cofactor.

It localises to the cytoplasm. It carries out the reaction NAD(+) + ATP = ADP + NADP(+) + H(+). Involved in the regulation of the intracellular balance of NAD and NADP, and is a key enzyme in the biosynthesis of NADP. Catalyzes specifically the phosphorylation on 2'-hydroxyl of the adenosine moiety of NAD to yield NADP. The protein is NAD kinase of Campylobacter jejuni subsp. jejuni serotype O:6 (strain 81116 / NCTC 11828).